The following is a 240-amino-acid chain: Oxygen-insensitive NADPH nitroreductase (240 aa).

FMN is bound by residues 11 to 15 (HRSIR), S39, Q67, 128 to 131 (YIGG), and 167 to 169 (KPR).

This sequence belongs to the flavin oxidoreductase frp family. As to quaternary structure, homodimer. Requires FMN as cofactor.

Catalyzes the reduction of nitroaromatic compounds using NADPH. Has a broad electron acceptor specificity. Reduces nitrofurazone by a ping-pong bi-bi mechanism possibly to generate a two-electron transfer product. The polypeptide is Oxygen-insensitive NADPH nitroreductase (nfsA) (Salmonella typhimurium (strain LT2 / SGSC1412 / ATCC 700720)).